The sequence spans 288 residues: Acetyl-coenzyme A carboxylase carboxyl transferase subunit beta (288 aa).

Residues 34–288 (LWVKCSRCNE…ANILSLHGTN (255 aa)) enclose the CoA carboxyltransferase N-terminal domain. Residues cysteine 38, cysteine 41, cysteine 57, and cysteine 60 each contribute to the Zn(2+) site. The segment at 38–60 (CSRCNEILYTKELDKNFKVCHKC) adopts a C4-type zinc-finger fold.

It belongs to the AccD/PCCB family. Acetyl-CoA carboxylase is a heterohexamer composed of biotin carboxyl carrier protein (AccB), biotin carboxylase (AccC) and two subunits each of ACCase subunit alpha (AccA) and ACCase subunit beta (AccD). The cofactor is Zn(2+).

Its subcellular location is the cytoplasm. The catalysed reaction is N(6)-carboxybiotinyl-L-lysyl-[protein] + acetyl-CoA = N(6)-biotinyl-L-lysyl-[protein] + malonyl-CoA. It functions in the pathway lipid metabolism; malonyl-CoA biosynthesis; malonyl-CoA from acetyl-CoA: step 1/1. In terms of biological role, component of the acetyl coenzyme A carboxylase (ACC) complex. Biotin carboxylase (BC) catalyzes the carboxylation of biotin on its carrier protein (BCCP) and then the CO(2) group is transferred by the transcarboxylase to acetyl-CoA to form malonyl-CoA. The sequence is that of Acetyl-coenzyme A carboxylase carboxyl transferase subunit beta from Desulforamulus reducens (strain ATCC BAA-1160 / DSM 100696 / MI-1) (Desulfotomaculum reducens).